A 402-amino-acid chain; its full sequence is Acetate kinase (402 aa).

A Mg(2+)-binding site is contributed by Asn13. Lys20 contacts ATP. Arg94 is a binding site for substrate. Asp151 functions as the Proton donor/acceptor in the catalytic mechanism. ATP is bound by residues 211-215, 285-287, and 333-337; these read HLGNG, DFR, and GVGEN. A Mg(2+)-binding site is contributed by Glu387.

The protein belongs to the acetokinase family. As to quaternary structure, homodimer. Requires Mg(2+) as cofactor. Mn(2+) is required as a cofactor.

The protein localises to the cytoplasm. It carries out the reaction acetate + ATP = acetyl phosphate + ADP. The protein operates within metabolic intermediate biosynthesis; acetyl-CoA biosynthesis; acetyl-CoA from acetate: step 1/2. Catalyzes the formation of acetyl phosphate from acetate and ATP. Can also catalyze the reverse reaction. The sequence is that of Acetate kinase from Nocardia farcinica (strain IFM 10152).